A 603-amino-acid polypeptide reads, in one-letter code: Chaperone protein DnaK (603 aa).

Residue Thr175 is modified to Phosphothreonine; by autocatalysis. Residues 573-586 (AQQAQQQNPDNQNN) show a composition bias toward low complexity. A disordered region spans residues 573 to 603 (AQQAQQQNPDNQNNNKDDVTEATVTDDSTKK). Residues 594-603 (ATVTDDSTKK) are compositionally biased toward polar residues.

The protein belongs to the heat shock protein 70 family.

Functionally, acts as a chaperone. The sequence is that of Chaperone protein DnaK from Ureaplasma parvum serovar 3 (strain ATCC 27815 / 27 / NCTC 11736).